The chain runs to 479 residues: MPRTSLLTLACALATGASAFSYGAAIPQSTQEKQFSQEFRDGYSILKHYGGNGPYSERVSYGIARDPPTGCEVDQVIMVKRHGERYPSPSAGKSIEEALAKVYSINTTEYKGDLAFLNDWTYYVPNECYYNAETTSGPYAGLLDAYNHGNDYKARYGHLWNGETVVPFFSSGYGRVIETARKFGEGFFGYNYSTNAALNIISESEVMGADSLTPTCDTDNDQTTCDNLTYQLPQFKVAAARLNSQNPGMNLTASDVYNLIVMASFELNARPFSNWINAFTQDEWVSFGYVEDLNYYYCAGPGDKNMAAVGAVYANASLTLLNQGPKEAGPLFFNFAHDTNITPILAALGVLIPNEDLPLDRVAFGNPYSIGNIVPMGGHLTIERLSCQATALSDKGTYVRLVLNEAVLPFNDCTSGPGYSCPLANYTSILNKNLPDYTTTCNVSASYPQYLSFWWNYNTTTELNYRSSPIACQEGDAMD.

Positions 1-19 are cleaved as a signal peptide; it reads MPRTSLLTLACALATGASA. The Nucleophile role is filled by His82. Residues Asn106, Asn191, Asn227, Asn250, and Asn315 are each glycosylated (N-linked (GlcNAc...) asparagine). The active-site Proton donor is the Asp338. Residues Asn425, Asn442, and Asn458 are each glycosylated (N-linked (GlcNAc...) asparagine).

The protein belongs to the histidine acid phosphatase family.

It catalyses the reaction 1D-myo-inositol hexakisphosphate + H2O = 1D-myo-inositol 1,2,4,5,6-pentakisphosphate + phosphate. Functionally, catalyzes the hydrolysis of inorganic orthophosphate from phytate. This chain is 3-phytase B (phyB), found in Aspergillus niger.